The primary structure comprises 357 residues: Chorismate synthase (357 aa).

NADP(+) is bound at residue arginine 46. FMN contacts are provided by residues 123 to 125 (RSS), 235 to 236 (NA), glycine 275, 290 to 294 (KPTPS), and arginine 316.

The protein belongs to the chorismate synthase family. As to quaternary structure, homotetramer. The cofactor is FMNH2.

The enzyme catalyses 5-O-(1-carboxyvinyl)-3-phosphoshikimate = chorismate + phosphate. It participates in metabolic intermediate biosynthesis; chorismate biosynthesis; chorismate from D-erythrose 4-phosphate and phosphoenolpyruvate: step 7/7. Functionally, catalyzes the anti-1,4-elimination of the C-3 phosphate and the C-6 proR hydrogen from 5-enolpyruvylshikimate-3-phosphate (EPSP) to yield chorismate, which is the branch point compound that serves as the starting substrate for the three terminal pathways of aromatic amino acid biosynthesis. This reaction introduces a second double bond into the aromatic ring system. The protein is Chorismate synthase of Nitratiruptor sp. (strain SB155-2).